The chain runs to 685 residues: Cilia- and flagella-associated protein 36 (685 aa).

The segment at M1–S20 is disordered. Residues S197 to Q242 are a coiled coil. The segment covering T287–T310 has biased composition (low complexity). The interval T287–V573 is disordered. The segment covering E363 to P372 has biased composition (basic and acidic residues). Polar residues predominate over residues G410–E434. Composition is skewed to basic and acidic residues over residues G439–Y456 and H508–P557.

This sequence belongs to the CFAP36 family. Expressed in amphid and phasmid ciliated neurons.

The protein localises to the cell projection. Its subcellular location is the cilium. It localises to the cytoplasm. It is found in the cytoskeleton. The protein resides in the cilium axoneme. The sequence is that of Cilia- and flagella-associated protein 36 from Caenorhabditis elegans.